Reading from the N-terminus, the 278-residue chain is Bis(5'-nucleosyl)-tetraphosphatase, symmetrical (278 aa).

The protein belongs to the Ap4A hydrolase family.

The catalysed reaction is P(1),P(4)-bis(5'-adenosyl) tetraphosphate + H2O = 2 ADP + 2 H(+). Its function is as follows. Hydrolyzes diadenosine 5',5'''-P1,P4-tetraphosphate to yield ADP. This chain is Bis(5'-nucleosyl)-tetraphosphatase, symmetrical, found in Methylococcus capsulatus (strain ATCC 33009 / NCIMB 11132 / Bath).